The following is a 226-amino-acid chain: Respiratory nitrate reductase 2 gamma chain (226 aa).

At 1–4 (MIQY) the chain is on the periplasmic side. A helical transmembrane segment spans residues 5–30 (LNVFFYDIYPYICATVFFLGSWLRYD). Residues 31 to 48 (YGQYTWRASSSQMLDKRG) lie on the Cytoplasmic side of the membrane. A helical transmembrane segment spans residues 49 to 71 (MVIWSNLFHIGILGIFFGHLFGM). Heme b is bound by residues His-57 and His-67. Over 72-83 (LTPHWMYAWFLP) the chain is Periplasmic. A helical membrane pass occupies residues 84–113 (VAAKQLMAMVLGGICGVLTLIGGAGLLWRR). Over 114–125 (LTNQRVRATSTT) the chain is Cytoplasmic. A helical membrane pass occupies residues 126–149 (PDIIIMSILLIQCLLGLSTIPFSA). The Periplasmic portion of the chain corresponds to 150 to 183 (QYPDGSEMMKLVGWAQSIVTFRGGSSEMLNGVAF). A helical membrane pass occupies residues 184-199 (VFRLHLVLGMTIFLLF). Positions 188 and 206 each coordinate heme b. At 200–226 (PFTRLVHVWSAPFEYFTRRYQIVRSRR) the chain is on the cytoplasmic side.

In terms of assembly, dimer of heterotrimers each composed of an alpha, a beta and a gamma chain. Alpha and beta are catalytic chains; gamma chains are involved in binding the enzyme complex to the cytoplasmic membrane. Heme serves as cofactor.

It is found in the cell inner membrane. The catalysed reaction is nitrate + a quinol = a quinone + nitrite + H2O. Its function is as follows. This is a second nitrate reductase enzyme which can substitute for the NRA enzyme and allows E.coli to use nitrate as an electron acceptor during anaerobic growth. The gamma chain is a membrane-embedded heme-iron unit resembling cytochrome b, which transfers electrons from quinones to the beta subunit. This chain is Respiratory nitrate reductase 2 gamma chain (narV), found in Escherichia coli (strain K12).